A 2319-amino-acid polypeptide reads, in one-letter code: A-kinase anchor protein 6 (2319 aa).

2 stretches are compositionally biased toward polar residues: residues 1–12 (MLTMSVTLSPLR) and 324–339 (GVSS…AAQP). Disordered stretches follow at residues 1 to 24 (MLTM…TDAS), 301 to 369 (VDDK…NATP), 493 to 532 (SRLK…VPNG), 566 to 614 (LQLQ…PSHV), and 691 to 757 (TRLG…SATK). A compositionally biased stretch (low complexity) spans 340 to 351 (SSETVQQESSSS). Polar residues-rich tracts occupy residues 518–532 (GKQA…VPNG) and 566–591 (LQLQ…SDNI). The segment covering 697–711 (SPSSSSDIASSLGES) has biased composition (low complexity). A compositionally biased stretch (basic and acidic residues) spans 735–754 (KYADEKSERASSSEKNESHS). 2 Spectrin repeats span residues 762–848 (QKLM…QLLE) and 1036–1150 (EKVD…LLDD). Residue Ser1073 is modified to Phosphoserine. Positions 1250–1272 (KLGETSNEDPGYDEEADNHGGSQ) are disordered. Acidic residues predominate over residues 1255–1265 (SNEDPGYDEEA). Ser1570 and Ser1595 each carry phosphoserine. 3 disordered regions span residues 1821–1842 (VSDE…PSDT), 1900–1925 (EGIP…SHGK), and 1963–1983 (KCPN…TEKS). Polar residues-rich tracts occupy residues 1830 to 1842 (DISS…PSDT), 1911 to 1920 (NVTSKVSENL), and 1972 to 1982 (NQSTASTPTEK). The interval 2063–2076 (IIDMASTALKSKSQ) is PKA-RII subunit binding domain. A compositionally biased stretch (low complexity) spans 2198–2215 (FSDSSLSADDADTVALSS). A disordered region spans residues 2198-2319 (FSDSSLSADD…HEKRHRNMHR (122 aa)).

As to quaternary structure, interacts with RII subunit of PKA, phosphatase 2B (calcineurin) and AKAP79. Interacts with SYNPO2. Highly expressed in cardiac and skeletal muscle, followed by brain.

The protein resides in the sarcoplasmic reticulum. It is found in the nucleus membrane. Binds to type II regulatory subunits of protein kinase A and anchors/targets them to the nuclear membrane or sarcoplasmic reticulum. May act as an adapter for assembling multiprotein complexes. This is A-kinase anchor protein 6 (AKAP6) from Homo sapiens (Human).